The sequence spans 315 residues: Adenine deaminase (315 aa).

Residues His14, His16, and His194 each coordinate Zn(2+). Glu197 functions as the Proton donor in the catalytic mechanism. Asp275 is a Zn(2+) binding site. Residue Asp276 coordinates substrate.

Belongs to the metallo-dependent hydrolases superfamily. Adenosine and AMP deaminases family. Adenine deaminase type 2 subfamily. It depends on Zn(2+) as a cofactor.

It carries out the reaction adenine + H2O + H(+) = hypoxanthine + NH4(+). Its function is as follows. Catalyzes the hydrolytic deamination of adenine to hypoxanthine. Plays an important role in the purine salvage pathway and in nitrogen catabolism. The sequence is that of Adenine deaminase from Ectopseudomonas mendocina (strain ymp) (Pseudomonas mendocina).